Consider the following 583-residue polypeptide: Sensor protein SrrB (583 aa).

The Cytoplasmic portion of the chain corresponds to 1–11; sequence MMSRLNSVVIK. The helical transmembrane segment at 12–32 threads the bilayer; sequence LWLTIILIVTTVLILLSIALI. At 33–174 the chain is on the extracellular side; it reads TFMQYYFTQE…SIEDTNNAIT (142 aa). Residues 175–195 traverse the membrane as a helical segment; it reads IITIITAVIFLTITTVFAFFL. The Cytoplasmic segment spans residues 196–583; sequence SSRITKPLRR…TFIIKLPKPE (388 aa). An HAMP domain is found at 197–249; sequence SRITKPLRRLRDQATRVSEGDYSYKPSVTTKDEIGQLSQAFNQMSTEIEEHVD. The 218-residue stretch at 366–583 folds into the Histidine kinase domain; the sequence is NVSHELRTPI…TFIIKLPKPE (218 aa). Position 369 is a phosphohistidine; by autocatalysis (histidine 369).

The protein resides in the cell membrane. It catalyses the reaction ATP + protein L-histidine = ADP + protein N-phospho-L-histidine.. Its function is as follows. Member of the two-component regulatory system SrrA/SrrB, which is involved in the global regulation of staphylococcal virulence factors in response to environmental oxygen levels as well as biofilm formation. Also plays an essential role in host-derived nitric oxide resistance by regulating hmp/flavohemoglobin, an enzyme that detoxifies nitric oxide by converting it to nitrate. Functions as a sensor protein kinase which is autophosphorylated at a histidine residue and transfers its phosphate group to SrrA. In turn, SrrA binds to the upstream promoter regions of the target genes to positively and negatively regulate their expression. In Staphylococcus aureus (strain MRSA252), this protein is Sensor protein SrrB (srrB).